The following is a 144-amino-acid chain: D-aminoacyl-tRNA deacylase (144 aa).

The Gly-cisPro motif, important for rejection of L-amino acids signature appears at 136–137 (GP).

This sequence belongs to the DTD family. As to quaternary structure, homodimer.

It is found in the cytoplasm. It carries out the reaction glycyl-tRNA(Ala) + H2O = tRNA(Ala) + glycine + H(+). It catalyses the reaction a D-aminoacyl-tRNA + H2O = a tRNA + a D-alpha-amino acid + H(+). An aminoacyl-tRNA editing enzyme that deacylates mischarged D-aminoacyl-tRNAs. Also deacylates mischarged glycyl-tRNA(Ala), protecting cells against glycine mischarging by AlaRS. Acts via tRNA-based rather than protein-based catalysis; rejects L-amino acids rather than detecting D-amino acids in the active site. By recycling D-aminoacyl-tRNA to D-amino acids and free tRNA molecules, this enzyme counteracts the toxicity associated with the formation of D-aminoacyl-tRNA entities in vivo and helps enforce protein L-homochirality. The chain is D-aminoacyl-tRNA deacylase from Glaesserella parasuis serovar 5 (strain SH0165) (Haemophilus parasuis).